A 107-amino-acid polypeptide reads, in one-letter code: Universal stress protein B homolog (107 aa).

Transmembrane regions (helical) follow at residues threonine 6 to phenylalanine 23 and leucine 89 to isoleucine 106.

This sequence belongs to the universal stress protein B family.

The protein localises to the cell inner membrane. The protein is Universal stress protein B homolog of Vibrio atlanticus (strain LGP32) (Vibrio splendidus (strain Mel32)).